We begin with the raw amino-acid sequence, 323 residues long: Cytosolic sulfotransferase 5 (323 aa).

69-74 contributes to the 3'-phosphoadenylyl sulfate binding site; that stretch reads KCGTTW. His135 acts as the Proton acceptor in catalysis. Residues Arg157, Ser165, and 289–291 contribute to the 3'-phosphoadenylyl sulfate site; that span reads RKG.

This sequence belongs to the sulfotransferase 1 family. In terms of tissue distribution, expressed in inflorescence stems, roots and siliques.

Its subcellular location is the cytoplasm. Its function is as follows. Sulfotransferase that utilizes 3'-phospho-5'-adenylyl sulfate (PAPS) as sulfonate donor to specifically catalyze the sulfate conjugation of flavones and flavonols. Strictly specific for the position 7. Substrate preference is kaempferol 3-sulfate &gt; isorhamnetin &gt; kaempferol. This chain is Cytosolic sulfotransferase 5 (SOT5), found in Arabidopsis thaliana (Mouse-ear cress).